The following is a 29-amino-acid chain: Conotoxin pr6a (29 aa).

Cystine bridges form between Cys2–Cys20, Cys9–Cys24, and Cys19–Cys28.

As to expression, expressed by the venom duct.

It is found in the secreted. In terms of biological role, intraperitoneal injection into fish (1 nmol) provokes hyperactivity and erratic swimming in various directions after 14 minutes. This Conus parius (Cone snail) protein is Conotoxin pr6a.